A 446-amino-acid polypeptide reads, in one-letter code: Maltoporin (446 aa).

Positions 1 to 25 (MMITLRKLPLAVAVAAGVMSAQAMA) are cleaved as a signal peptide.

This sequence belongs to the porin LamB (TC 1.B.3) family. In terms of assembly, homotrimer formed of three 18-stranded antiparallel beta-barrels, containing three independent channels.

The protein localises to the cell outer membrane. It catalyses the reaction beta-maltose(in) = beta-maltose(out). In terms of biological role, involved in the transport of maltose and maltodextrins. This Escherichia coli O127:H6 (strain E2348/69 / EPEC) protein is Maltoporin.